The chain runs to 110 residues: Multidrug transporter PA4990 (110 aa).

Transmembrane regions (helical) follow at residues leucine 7–phenylalanine 27, leucine 31–methionine 51, valine 58–valine 78, and proline 85–serine 105.

The protein belongs to the drug/metabolite transporter (DMT) superfamily. Small multidrug resistance (SMR) (TC 2.A.7.1) family.

It is found in the cell membrane. Functionally, confers resistance to ethidium bromide, acriflavine and methyl viologen. This chain is Multidrug transporter PA4990, found in Pseudomonas aeruginosa (strain ATCC 15692 / DSM 22644 / CIP 104116 / JCM 14847 / LMG 12228 / 1C / PRS 101 / PAO1).